A 489-amino-acid polypeptide reads, in one-letter code: 3-octaprenyl-4-hydroxybenzoate carboxy-lyase (489 aa).

N172 provides a ligand contact to Mn(2+). Prenylated FMN is bound by residues 175–177 (IYR), 189–191 (RWL), and 194–195 (RG). Position 238 (E238) interacts with Mn(2+). The active-site Proton donor is D287.

This sequence belongs to the UbiD family. In terms of assembly, homohexamer. Requires prenylated FMN as cofactor. Mn(2+) is required as a cofactor.

It is found in the cell membrane. The catalysed reaction is a 4-hydroxy-3-(all-trans-polyprenyl)benzoate + H(+) = a 2-(all-trans-polyprenyl)phenol + CO2. Its pathway is cofactor biosynthesis; ubiquinone biosynthesis. Functionally, catalyzes the decarboxylation of 3-octaprenyl-4-hydroxy benzoate to 2-octaprenylphenol, an intermediate step in ubiquinone biosynthesis. The protein is 3-octaprenyl-4-hydroxybenzoate carboxy-lyase of Klebsiella pneumoniae (strain 342).